We begin with the raw amino-acid sequence, 145 residues long: Large ribosomal subunit protein uL11 (145 aa).

This sequence belongs to the universal ribosomal protein uL11 family. As to quaternary structure, part of the ribosomal stalk of the 50S ribosomal subunit. Interacts with L10 and the large rRNA to form the base of the stalk. L10 forms an elongated spine to which L12 dimers bind in a sequential fashion forming a multimeric L10(L12)X complex. In terms of processing, one or more lysine residues are methylated.

Forms part of the ribosomal stalk which helps the ribosome interact with GTP-bound translation factors. In Rickettsia prowazekii (strain Madrid E), this protein is Large ribosomal subunit protein uL11.